A 335-amino-acid chain; its full sequence is Mitochondrial uncoupling protein 4C (335 aa).

Solcar repeat units follow at residues 34–125, 137–229, and 238–329; these read RNLF…FRRP, LKIY…SKRT, and EGLP…LRQW. Transmembrane regions (helical) follow at residues 40 to 57, 100 to 118, 138 to 157, 204 to 223, 244 to 264, and 304 to 323; these read YVNT…VFPL, GFSA…RVVL, KIYM…QALA, GVGP…VGSY, FVSS…ADVI, and GLMP…WLSV.

Belongs to the mitochondrial carrier (TC 2.A.29) family.

The protein resides in the mitochondrion inner membrane. Functionally, mitochondrial protein that is likely to be responsible for thermogenic respiration. Likely to function in mitochondrial uncoupling i.e. creating mitochondrial proton leaks across the inner mitochondrial membrane and can therefore dissipate the mitochondrial proton gradient and convert the energy of substrate oxidation into heat instead of ATP. Involved in cold tolerance, it is required for development to the adult stage at low temperatures. This is Mitochondrial uncoupling protein 4C from Drosophila melanogaster (Fruit fly).